The following is a 229-amino-acid chain: Uracil-DNA glycosylase (229 aa).

Asp64 (proton acceptor) is an active-site residue.

This sequence belongs to the uracil-DNA glycosylase (UDG) superfamily. UNG family.

It localises to the cytoplasm. The catalysed reaction is Hydrolyzes single-stranded DNA or mismatched double-stranded DNA and polynucleotides, releasing free uracil.. Its function is as follows. Excises uracil residues from the DNA which can arise as a result of misincorporation of dUMP residues by DNA polymerase or due to deamination of cytosine. In Escherichia coli (strain 55989 / EAEC), this protein is Uracil-DNA glycosylase.